A 147-amino-acid chain; its full sequence is Large ribosomal subunit protein uL15 (147 aa).

Over residues 1-10 (MYLNTLSPNS) the composition is skewed to polar residues. Residues 1 to 48 (MYLNTLSPNSKSHKKSKRVGRGIGSGFGKTSGRGHKGQKSRSGCKIRR) are disordered. The span at 11–20 (KSHKKSKRVG) shows a compositional bias: basic residues. Gly residues predominate over residues 21–31 (RGIGSGFGKTS). A compositionally biased stretch (basic residues) spans 32–47 (GRGHKGQKSRSGCKIR).

The protein belongs to the universal ribosomal protein uL15 family. Part of the 50S ribosomal subunit.

Binds to the 23S rRNA. This is Large ribosomal subunit protein uL15 from Buchnera aphidicola subsp. Baizongia pistaciae (strain Bp).